A 289-amino-acid chain; its full sequence is Trimeric intracellular cation channel type B (289 aa).

Topologically, residues 1-18 (MDVFAFFNLNELAFGLSK) are lumenal. The chain crosses the membrane as a helical span at residues 19-36 (LPMFPYFDMAHYIISVMS). Over 37–49 (LREQPGALCVSQR) the chain is Cytoplasmic. A helical membrane pass occupies residues 50 to 73 (SPLACWFSSMLYCFGGAVLSALML). The Lumenal segment spans residues 74–85 (ADAPVAPLSNTT). Residues 86-103 (NLLLATLMWYLVFYCPLD) traverse the membrane as a helical segment. The Cytoplasmic segment spans residues 104–107 (VVYS). A helical membrane pass occupies residues 108-125 (LASLLPLRLVLTAMKEVT). Residues K122 and R126 each coordinate a 1,2-diacyl-sn-glycero-3-phospho-(1D-myo-inositol-4,5-bisphosphate). The Lumenal portion of the chain corresponds to 126 to 144 (RTWKVLSGVSQAGSKYSDA). A helical transmembrane segment spans residues 145 to 162 (LFVMVAVGWAKGAGGGLI). At 163–183 (SNFEQLVRGVWKPETNELLKM) the chain is on the cytoplasmic side. Residues 184 to 201 (SYPTKVTLLGAVVFSLQQ) form a helical membrane-spanning segment. At 202–210 (CRYLPIQTH) the chain is on the lumenal side. The helical transmembrane segment at 211–230 (HLTFIYTLFTVTNKTRMMLL) threads the bilayer. Over 231-289 (GSSSHPLSSLESFLYKTLFVRPLTDLSAEHTHSKHNGSVPEPTTAQTHTKEAEASKKTN) the chain is Cytoplasmic. The tract at residues 260–289 (HTHSKHNGSVPEPTTAQTHTKEAEASKKTN) is disordered. Residues 278–289 (HTKEAEASKKTN) are compositionally biased toward basic and acidic residues.

It belongs to the TMEM38 family. In terms of assembly, homotrimer; conformation seems to be controled by binding to diacylglycerol (DAG).

It is found in the endoplasmic reticulum membrane. It catalyses the reaction K(+)(in) = K(+)(out). Channel activity is activated by increased cytosolic Ca(2+) levels and blocked by luminal high Ca(2+) levels. In terms of biological role, intracellular monovalent cation channel required for maintenance of rapid intracellular calcium release. Acts as a potassium counter-ion channel that functions in synchronization with calcium release from intracellular stores. Activated by increased cytosolic Ca(2+) levels. The polypeptide is Trimeric intracellular cation channel type B (tmem38b) (Danio rerio (Zebrafish)).